Consider the following 200-residue polypeptide: Holliday junction branch migration complex subunit RuvA (200 aa).

A domain I region spans residues 1–64 (MFTYFRGELI…EDLMQLFGFL (64 aa)). The tract at residues 65-143 (EEEERQLFRL…KLRPSGGTKS (79 aa)) is domain II. Residues 144 to 148 (VSRLS) are flexible linker. Residues 148 to 200 (SESSMRDDAVNALVTLGFLRSVAQKAVTESLTSLRNPQVEDLVRDALLTIRTP) form a domain III region.

It belongs to the RuvA family. As to quaternary structure, homotetramer. Forms an RuvA(8)-RuvB(12)-Holliday junction (HJ) complex. HJ DNA is sandwiched between 2 RuvA tetramers; dsDNA enters through RuvA and exits via RuvB. An RuvB hexamer assembles on each DNA strand where it exits the tetramer. Each RuvB hexamer is contacted by two RuvA subunits (via domain III) on 2 adjacent RuvB subunits; this complex drives branch migration. In the full resolvosome a probable DNA-RuvA(4)-RuvB(12)-RuvC(2) complex forms which resolves the HJ.

The protein localises to the cytoplasm. Functionally, the RuvA-RuvB-RuvC complex processes Holliday junction (HJ) DNA during genetic recombination and DNA repair, while the RuvA-RuvB complex plays an important role in the rescue of blocked DNA replication forks via replication fork reversal (RFR). RuvA specifically binds to HJ cruciform DNA, conferring on it an open structure. The RuvB hexamer acts as an ATP-dependent pump, pulling dsDNA into and through the RuvAB complex. HJ branch migration allows RuvC to scan DNA until it finds its consensus sequence, where it cleaves and resolves the cruciform DNA. The chain is Holliday junction branch migration complex subunit RuvA from Chlorobium phaeobacteroides (strain BS1).